Consider the following 189-residue polypeptide: Probable nicotinate-nucleotide adenylyltransferase (189 aa).

This sequence belongs to the NadD family.

It carries out the reaction nicotinate beta-D-ribonucleotide + ATP + H(+) = deamido-NAD(+) + diphosphate. It functions in the pathway cofactor biosynthesis; NAD(+) biosynthesis; deamido-NAD(+) from nicotinate D-ribonucleotide: step 1/1. Catalyzes the reversible adenylation of nicotinate mononucleotide (NaMN) to nicotinic acid adenine dinucleotide (NaAD). This Bacillus licheniformis (strain ATCC 14580 / DSM 13 / JCM 2505 / CCUG 7422 / NBRC 12200 / NCIMB 9375 / NCTC 10341 / NRRL NRS-1264 / Gibson 46) protein is Probable nicotinate-nucleotide adenylyltransferase.